The chain runs to 536 residues: Carboxypeptidase Y homolog A (536 aa).

The signal sequence occupies residues 1-17; the sequence is MKFFTTGLLATAALAAA. Positions 18-124 are excised as a propeptide; the sequence is QEQQVLQAED…KLHNYDLRVK (107 aa). 5 disulfide bridges follow: cysteine 172/cysteine 412, cysteine 306/cysteine 320, cysteine 330/cysteine 353, cysteine 337/cysteine 346, and cysteine 375/cysteine 382. Asparagine 203 carries an N-linked (GlcNAc...) asparagine glycan. Serine 259 is an active-site residue. Aspartate 451 is a catalytic residue. Asparagine 502 carries N-linked (GlcNAc...) asparagine glycosylation. Histidine 513 is a catalytic residue.

It belongs to the peptidase S10 family.

The protein localises to the vacuole. It catalyses the reaction Release of a C-terminal amino acid with broad specificity.. In terms of biological role, vacuolar carboxypeptidase involved in degradation of small peptides. Digests preferentially peptides containing an aliphatic or hydrophobic residue in P1' position, as well as methionine, leucine or phenylalanine in P1 position of ester substrate. This Trichophyton rubrum (Athlete's foot fungus) protein is Carboxypeptidase Y homolog A (cpyA).